Here is a 23-residue protein sequence, read N- to C-terminus: uncharacterized protein (23 aa).

The helical transmembrane segment at 3–23 (YFFMGISFMVIVWAGTFALMI) threads the bilayer.

Its subcellular location is the cell inner membrane. This is an uncharacterized protein from Escherichia coli (strain K12).